A 401-amino-acid polypeptide reads, in one-letter code: Collagen and calcium-binding EGF domain-containing protein 1 (401 aa).

The N-terminal stretch at 1–22 (MIYPGRGASLSVAVALVLFSSG) is a signal peptide. In terms of domain architecture, EGF-like; calcium-binding spans 126-167 (DIDECANNNETVCSQMCVNTPGSYRCDCHSGFYLEDDGKTCT). Disulfide bonds link cysteine 130–cysteine 142, cysteine 138–cysteine 151, and cysteine 153–cysteine 166. Asparagine 134 is a glycosylation site (N-linked (GlcNAc...) asparagine). Disordered regions lie at residues 229–321 (TTNS…PGSF) and 344–401 (SRPL…DWPV). Collagen-like domains are found at residues 234–276 (LPGP…PIGP) and 286–319 (GRRGPVGPPGAPGRDGMKGERGFPGPSGPPGPPG). A compositionally biased stretch (pro residues) spans 235–244 (PGPPGPPGPA). Residues 246 to 258 (TPGAKGSSGSPGQ) show a composition bias toward low complexity.

The protein belongs to the CCBE1 family. In terms of tissue distribution, not expressed in blood or lymphatic endothelial cells, correlating spatially and temporally with the migration routes of endothelial cells that bud from the PCV, migrate in association with somite boundaries and seed the horizontal myoseptum region from where lymphatic precursors later migrate.

It localises to the secreted. Functionally, required for lymphangioblast budding and angiogenic sprouting from venous endothelium during embryogenesis. Required for the formation of facial lymphatic structures. Necessary for lymphangiogenesis, but is probably not part of either the vegfc-vegfr3 signaling or sox18-prox1 transcriptional pathways. This Danio rerio (Zebrafish) protein is Collagen and calcium-binding EGF domain-containing protein 1 (ccbe1).